The sequence spans 405 residues: Bestrophin homolog 14 (405 aa).

4 helical membrane passes run 28–48 (LIGFYIAYYIVLAFQWYLLDE), 63–83 (IGAQYIPLSFLLGFFVSLIVA), 223–243 (LVYTQVVAIATYGYFFICLIG), and 256–276 (EITILFPIFTTFQMLFYLGWL).

This sequence belongs to the anion channel-forming bestrophin (TC 1.A.46) family. Calcium-sensitive chloride channel subfamily.

The protein resides in the membrane. This chain is Bestrophin homolog 14 (best-14), found in Caenorhabditis elegans.